The following is a 115-amino-acid chain: Large ribosomal subunit protein bL19 (115 aa).

The protein belongs to the bacterial ribosomal protein bL19 family.

Its function is as follows. This protein is located at the 30S-50S ribosomal subunit interface and may play a role in the structure and function of the aminoacyl-tRNA binding site. The sequence is that of Large ribosomal subunit protein bL19 from Akkermansia muciniphila (strain ATCC BAA-835 / DSM 22959 / JCM 33894 / BCRC 81048 / CCUG 64013 / CIP 107961 / Muc).